A 121-amino-acid chain; its full sequence is Small ribosomal subunit protein uS13 (121 aa).

Positions 94–121 (GLPVRGQKTRNNAHTVKGKPKAIAGKKK) are disordered. Residues 109-121 (VKGKPKAIAGKKK) show a composition bias toward basic residues.

This sequence belongs to the universal ribosomal protein uS13 family. As to quaternary structure, part of the 30S ribosomal subunit. Forms a loose heterodimer with protein S19. Forms two bridges to the 50S subunit in the 70S ribosome.

In terms of biological role, located at the top of the head of the 30S subunit, it contacts several helices of the 16S rRNA. In the 70S ribosome it contacts the 23S rRNA (bridge B1a) and protein L5 of the 50S subunit (bridge B1b), connecting the 2 subunits; these bridges are implicated in subunit movement. Contacts the tRNAs in the A and P-sites. The sequence is that of Small ribosomal subunit protein uS13 from Onion yellows phytoplasma (strain OY-M).